Reading from the N-terminus, the 428-residue chain is Flotillin-2 (428 aa).

Gly2 carries the N-myristoyl glycine lipid modification. Cys4 is lipidated: S-palmitoyl cysteine; by ZDHHC5. Cys19 carries the S-palmitoyl cysteine lipid modification. Residue Cys20 is the site of S-palmitoyl cysteine; by ZDHHC5 attachment. Ser405 is subject to Phosphoserine.

This sequence belongs to the band 7/mec-2 family. Flotillin subfamily. Heterooligomeric complex of flotillin-1 and flotillin-2 and caveolin-1 and caveolin-2. Interacts with ECPAS. In terms of processing, ZDHHC5-catalyzed palmitoylation may be required for the formation of higher-order complexes and for neurite outgrowth in cultured neural stem cells. Expressed in many tissues, including suprabasal epidermis, hair follicles, heart, lung, thymus, spleen, liver, kidney and brain. Not expressed in skeletal muscle.

The protein localises to the cell membrane. It localises to the membrane. Its subcellular location is the caveola. It is found in the endosome. Its function is as follows. May act as a scaffolding protein within caveolar membranes, functionally participating in formation of caveolae or caveolae-like vesicles. May be involved in epidermal cell adhesion and epidermal structure and function. This chain is Flotillin-2 (Flot2), found in Mus musculus (Mouse).